Here is a 140-residue protein sequence, read N- to C-terminus: uncharacterized protein (140 aa).

It belongs to the peptidase S24 family.

This is an uncharacterized protein from Haemophilus influenzae (strain ATCC 51907 / DSM 11121 / KW20 / Rd).